The primary structure comprises 427 residues: 3-phosphoshikimate 1-carboxyvinyltransferase (427 aa).

Positions 27, 28, and 32 each coordinate 3-phosphoshikimate. Lys-27 is a binding site for phosphoenolpyruvate. Phosphoenolpyruvate is bound by residues Gly-95 and Arg-123. 3-phosphoshikimate contacts are provided by Ser-166, Ser-167, Gln-168, Ser-192, Asp-305, and Lys-332. Gln-168 lines the phosphoenolpyruvate pocket. Asp-305 serves as the catalytic Proton acceptor. Phosphoenolpyruvate is bound by residues Arg-336 and Arg-377.

Belongs to the EPSP synthase family. Monomer.

The protein resides in the cytoplasm. It catalyses the reaction 3-phosphoshikimate + phosphoenolpyruvate = 5-O-(1-carboxyvinyl)-3-phosphoshikimate + phosphate. It functions in the pathway metabolic intermediate biosynthesis; chorismate biosynthesis. In terms of biological role, catalyzes the transfer of the enolpyruvyl moiety of phosphoenolpyruvate (PEP) to the 5-hydroxyl of shikimate-3-phosphate (S3P) to produce enolpyruvyl shikimate-3-phosphate and inorganic phosphate. This is 3-phosphoshikimate 1-carboxyvinyltransferase from Aeropyrum pernix (strain ATCC 700893 / DSM 11879 / JCM 9820 / NBRC 100138 / K1).